The sequence spans 204 residues: UPF0637 protein Lm4b_01081 (204 aa).

It belongs to the UPF0637 family.

The sequence is that of UPF0637 protein Lm4b_01081 from Listeria monocytogenes serotype 4b (strain CLIP80459).